Reading from the N-terminus, the 397-residue chain is Subtilisin-like protease 3 (397 aa).

Residues 1–19 (MGCIKVISVFLAAIAAVDA) form the signal peptide. The propeptide occupies 20–116 (RAFFHNRGGS…VEHDRVVKLA (97 aa)). The Inhibitor I9 domain maps to 35 to 116 (SYIVVMKDGV…VEHDRVVKLA (82 aa)). In terms of domain architecture, Peptidase S8 spans 126 to 397 (TWGLGRVSHR…NRLLYNGSGQ (272 aa)). Residues Asp158 and His189 each act as charge relay system in the active site. The N-linked (GlcNAc...) asparagine glycan is linked to Asn250. The Charge relay system role is filled by Ser344. Residue Asn393 is glycosylated (N-linked (GlcNAc...) asparagine).

Belongs to the peptidase S8 family.

The protein resides in the secreted. Its function is as follows. Secreted subtilisin-like serine protease with keratinolytic activity that contributes to pathogenicity. The chain is Subtilisin-like protease 3 (SUB3) from Trichophyton equinum (Horse ringworm fungus).